Here is a 959-residue protein sequence, read N- to C-terminus: Outer capsid protein VP2 (959 aa).

This sequence belongs to the orbivirus VP2 family.

The protein localises to the virion. The VP2 protein is one of the two proteins (with VP5) which constitute the virus particle outer capsid. It is the major target of the host immunogenic response. Responsible for viral attachment to target host cell, probably by binding to sialic acid. This attachment induces virion internalization predominantly through clathrin-dependent endocytosis. This is Outer capsid protein VP2 (Segment-2) from Antilocapra americana (Pronghorn).